The primary structure comprises 215 residues: MGETSKWWWIGANHNTSNSSPWLNSTLSELDSKTKEMLSVIDEVEDEGDSLMKRAKINYENKPKLIELLEELYRSHRSLAQKHDLLIKTSSLNSDSHNSSSCDEIRSEVCEETESSDVEAETEKDQIVEFDDGDETMKEELEILREENRVYKEKKEVVTRLLANLVRVCFCFQFNWEIFSYHLLRFCLLFSHDPIGGWVICTKRFRYYFLIMFSF.

The NAB domain maps to 5–90; sequence SKWWWIGANH…QKHDLLIKTS (86 aa). The stretch at 134 to 165 forms a coiled coil; sequence DETMKEELEILREENRVYKEKKEVVTRLLANL.

Belongs to the NET family. In terms of assembly, interacts with F-actin.

Plant-specific actin binding protein. May be part of a membrane-cytoskeletal adapter complex. This chain is Protein NETWORKED 3B, found in Arabidopsis thaliana (Mouse-ear cress).